Consider the following 625-residue polypeptide: Dual specificity protein phosphatase 8 (625 aa).

One can recognise a Rhodanese domain in the interval 23 to 138 (GPGGPLVIDS…FSSCFPGLCE (116 aa)). Positions 160 to 302 (GLTRILPHLY…LLEYERSLKL (143 aa)) constitute a Tyrosine-protein phosphatase domain. The active-site Phosphocysteine intermediate is cysteine 246. The tract at residues 306-586 (LQGDPGTPSG…PAPETQFKRR (281 aa)) is disordered. A compositionally biased stretch (basic and acidic residues) spans 380–389 (SSDRLQDTNR). A compositionally biased stretch (low complexity) spans 431–448 (AALGLSSPSPDSPDAAPE). A compositionally biased stretch (basic and acidic residues) spans 555–570 (DLRRREAARAEPRDAR).

Belongs to the protein-tyrosine phosphatase family. Non-receptor class dual specificity subfamily. In terms of assembly, monomer. Abundant in brain, heart and skeletal muscle.

The protein resides in the cytoplasm. The protein localises to the nucleus. It catalyses the reaction O-phospho-L-tyrosyl-[protein] + H2O = L-tyrosyl-[protein] + phosphate. It carries out the reaction O-phospho-L-seryl-[protein] + H2O = L-seryl-[protein] + phosphate. The catalysed reaction is O-phospho-L-threonyl-[protein] + H2O = L-threonyl-[protein] + phosphate. Functionally, has phosphatase activity with synthetic phosphatase substrates and negatively regulates mitogen-activated protein kinase activity, presumably by catalysing their dephosphorylation. Expected to display protein phosphatase activity toward phosphotyrosine, phosphoserine and phosphothreonine residues. The sequence is that of Dual specificity protein phosphatase 8 (DUSP8) from Homo sapiens (Human).